The chain runs to 456 residues: Cysteine--tRNA ligase (456 aa).

Cys29 lines the Zn(2+) pocket. A 'HIGH' region motif is present at residues 31–41 (VTVYDYCHVGH). Residues Cys210, His235, and Glu239 each contribute to the Zn(2+) site. Residues 267 to 271 (KMSKS) carry the 'KMSKS' region motif. Lys270 lines the ATP pocket.

Belongs to the class-I aminoacyl-tRNA synthetase family. As to quaternary structure, monomer. It depends on Zn(2+) as a cofactor.

The protein resides in the cytoplasm. The catalysed reaction is tRNA(Cys) + L-cysteine + ATP = L-cysteinyl-tRNA(Cys) + AMP + diphosphate. The polypeptide is Cysteine--tRNA ligase (Hydrogenovibrio crunogenus (strain DSM 25203 / XCL-2) (Thiomicrospira crunogena)).